The sequence spans 703 residues: FERM domain-containing protein 7 (703 aa).

One can recognise an FERM domain in the interval 2–282 (LHLKVQFLDD…EYHAFFRLSE (281 aa)). Positions 525–552 (RNMRIKSLQQDLQELQEAMARTSGRSNI) form a coiled coil.

In terms of tissue distribution, in the developing cerebral cortex, strong expression is observed in the ventricular and intermediate zones at 13 and 17 dpc. At 17 dpc and P0, expression appears to be restricted to the cortical plate. In neonates, highly expressed in cortex, hippocampus, cerebellum, olfactory bulb and eye with little or no expression in liver, kidney, skeletal muscle or heart muscle (at protein level).

Its subcellular location is the cell projection. It localises to the neuron projection. The protein localises to the growth cone. Functionally, plays a role in neurite development, may be through the activation of the GTPase RAC1. Plays a role in the control of eye movement and gaze stability. The polypeptide is FERM domain-containing protein 7 (Mus musculus (Mouse)).